A 175-amino-acid chain; its full sequence is Sec-independent protein translocase protein TatB (175 aa).

Residues 1 to 21 traverse the membrane as a helical segment; it reads MLDLGLSKMALIGVVALVVLG. The interval 155-175 is disordered; the sequence is SGAARVARHQPASLRRPTRFF.

Belongs to the TatB family. The Tat system comprises two distinct complexes: a TatABC complex, containing multiple copies of TatA, TatB and TatC subunits, and a separate TatA complex, containing only TatA subunits. Substrates initially bind to the TatABC complex, which probably triggers association of the separate TatA complex to form the active translocon.

It is found in the cell inner membrane. In terms of biological role, part of the twin-arginine translocation (Tat) system that transports large folded proteins containing a characteristic twin-arginine motif in their signal peptide across membranes. Together with TatC, TatB is part of a receptor directly interacting with Tat signal peptides. TatB may form an oligomeric binding site that transiently accommodates folded Tat precursor proteins before their translocation. This chain is Sec-independent protein translocase protein TatB, found in Burkholderia lata (strain ATCC 17760 / DSM 23089 / LMG 22485 / NCIMB 9086 / R18194 / 383).